We begin with the raw amino-acid sequence, 53 residues long: Mannose/glucose-specific lectin alpha 1 chain (53 aa).

The protein belongs to the leguminous lectin family. In terms of assembly, tetramer of two alpha and two beta chains.

The sequence is that of Mannose/glucose-specific lectin alpha 1 chain from Lathyrus ochrus (Cyprus-vetch).